The chain runs to 139 residues: Putative pre-16S rRNA nuclease (139 aa).

This sequence belongs to the YqgF nuclease family.

Its subcellular location is the cytoplasm. Its function is as follows. Could be a nuclease involved in processing of the 5'-end of pre-16S rRNA. This chain is Putative pre-16S rRNA nuclease, found in Proteus mirabilis (strain HI4320).